The primary structure comprises 345 residues: L-threonine 3-dehydrogenase (345 aa).

Residue cysteine 42 coordinates Zn(2+). Catalysis depends on charge relay system residues threonine 44 and histidine 47. 6 residues coordinate Zn(2+): histidine 67, glutamate 68, cysteine 97, cysteine 100, cysteine 103, and cysteine 111. NAD(+) is bound by residues isoleucine 179, aspartate 199, arginine 204, 266–268, and 290–291; these read LGI and IY.

It belongs to the zinc-containing alcohol dehydrogenase family. As to quaternary structure, homotetramer. It depends on Zn(2+) as a cofactor.

It localises to the cytoplasm. It carries out the reaction L-threonine + NAD(+) = (2S)-2-amino-3-oxobutanoate + NADH + H(+). It functions in the pathway amino-acid degradation; L-threonine degradation via oxydo-reductase pathway; glycine from L-threonine: step 1/2. Its function is as follows. Catalyzes the NAD(+)-dependent oxidation of L-threonine to 2-amino-3-ketobutyrate. In Rhizobium etli (strain CIAT 652), this protein is L-threonine 3-dehydrogenase.